The primary structure comprises 179 residues: ATP synthase subunit b (179 aa).

The chain crosses the membrane as a helical span at residues 23–43 (IVVGLVAFGLLAFVLMKFVFP).

This sequence belongs to the ATPase B chain family. As to quaternary structure, F-type ATPases have 2 components, F(1) - the catalytic core - and F(0) - the membrane proton channel. F(1) has five subunits: alpha(3), beta(3), gamma(1), delta(1), epsilon(1). F(0) has three main subunits: a(1), b(2) and c(10-14). The alpha and beta chains form an alternating ring which encloses part of the gamma chain. F(1) is attached to F(0) by a central stalk formed by the gamma and epsilon chains, while a peripheral stalk is formed by the delta and b chains.

Its subcellular location is the cell membrane. Functionally, f(1)F(0) ATP synthase produces ATP from ADP in the presence of a proton or sodium gradient. F-type ATPases consist of two structural domains, F(1) containing the extramembraneous catalytic core and F(0) containing the membrane proton channel, linked together by a central stalk and a peripheral stalk. During catalysis, ATP synthesis in the catalytic domain of F(1) is coupled via a rotary mechanism of the central stalk subunits to proton translocation. Its function is as follows. Component of the F(0) channel, it forms part of the peripheral stalk, linking F(1) to F(0). The chain is ATP synthase subunit b from Salinispora arenicola (strain CNS-205).